The sequence spans 82 residues: MKLTCMMIVAVLFLTAWTLVMADDSNNGLANHFLKSRDEMEDPEASKLEKRACSKKWEYCIVPILGFVYCCPGLICGPFVCV.

Positions 1-22 are cleaved as a signal peptide; the sequence is MKLTCMMIVAVLFLTAWTLVMA. Positions 23–49 are excised as a propeptide; that stretch reads DDSNNGLANHFLKSRDEMEDPEASKLE. 3 disulfides stabilise this stretch: Cys-53–Cys-71, Cys-60–Cys-76, and Cys-70–Cys-81.

Belongs to the conotoxin O1 superfamily. As to expression, expressed by the venom duct.

It localises to the secreted. Functionally, muO-conotoxins are gating-modifier toxins that inhibit sodium current by trapping the domain II voltage sensor in the closed position to prevent opening of the sodium channel. This toxin has a preference for Nav1.4/SCN4A over Nav1.2/SCN2A sodium channels. It blocks Nav channels by interacting mainly with the C-terminal part of the pore loop of domain-3. It also blocks fast-inactivating calcium current. Blocks Nav1.8/SCN10A sodium channels and has potent and long-lasting local anesthetic effects. It can also block propagation of action potentials in A- and C-fibers in sciatic nerve as well as skeletal muscle in isolated preparations. The sequence is that of Mu-conotoxin MrVIB from Conus marmoreus (Marble cone).